Here is a 470-residue protein sequence, read N- to C-terminus: MTKTLPEDFIFGGATAAYQAEGATNTDGKGRVAWDTYLEENYWYTAEPASDFYNRYPVDLELSEKFGVNGIRISIAWSRIFPNGYGEVNPKGVEYYHKLFAECHKRHVEPFVTLHHFDTPEVLHKDGDFLNRKTIDYFVDYAEYCFKEFPEVKYWTTFNEIGPIGDGQYLVGKFPPGIKYDFEKVFQSHHNMMVAHARAVKLFKDGGYQGEIGVVHALPTKYPFDPSNPEDVRAAELEDIIHNKFILDATYLGEYSRETMEGVQHILSVNGGKLNITDEDYAILDAAKDLNDFLGINYYMSDWMRGYDGESEITHNATGDKGGSKYQLKGVGQREFDVDVPRTDWDWMIYPQGLYDQIMRVVKDYPNYHKIYITENGLGYKDEFIESEKTVHDDARIDYVRQHLNVIADAIKDGANVKGYFIWSLMDVFSWSNGYEKRYGLFYVDFETQERYPKKSAYWYKELAETKEIK.

D-galactose 6-phosphate-binding residues include Q19, H116, N159, E160, and N297. The Proton donor role is filled by E160. E375 (nucleophile) is an active-site residue. D-galactose 6-phosphate-binding residues include S430, W431, K437, and Y439.

The protein belongs to the glycosyl hydrolase 1 family.

It catalyses the reaction a 6-phospho-beta-D-galactoside + H2O = D-galactose 6-phosphate + an alcohol. It participates in carbohydrate metabolism; lactose degradation; D-galactose 6-phosphate and beta-D-glucose from lactose 6-phosphate: step 1/1. This chain is 6-phospho-beta-galactosidase, found in Staphylococcus aureus (strain MRSA252).